The sequence spans 98 residues: MNLERLYKVLLGPVISEKSAVVADKGNQVVFKVVKTATKPEIKAAVEKLFNVNVRDVRVLNVKGKTKRTRFGLGQRSDWKKAYVRLEQGQEIDFAIAE.

Belongs to the universal ribosomal protein uL23 family. As to quaternary structure, part of the 50S ribosomal subunit. Contacts protein L29, and trigger factor when it is bound to the ribosome.

One of the early assembly proteins it binds 23S rRNA. One of the proteins that surrounds the polypeptide exit tunnel on the outside of the ribosome. Forms the main docking site for trigger factor binding to the ribosome. This is Large ribosomal subunit protein uL23 from Saccharophagus degradans (strain 2-40 / ATCC 43961 / DSM 17024).